The chain runs to 661 residues: Translation factor GUF1 homolog, mitochondrial (661 aa).

One can recognise a tr-type G domain in the interval 59 to 242 (ENIRNFCIVA…AIIDRIPSPK (184 aa)). Residues 68-75 (AHVDHGKS), 135-139 (DTPGH), and 189-192 (NKVD) each bind GTP.

This sequence belongs to the TRAFAC class translation factor GTPase superfamily. Classic translation factor GTPase family. LepA subfamily.

It is found in the mitochondrion inner membrane. It catalyses the reaction GTP + H2O = GDP + phosphate + H(+). Its function is as follows. Promotes mitochondrial protein synthesis. May act as a fidelity factor of the translation reaction, by catalyzing a one-codon backward translocation of tRNAs on improperly translocated ribosomes. Binds to mitochondrial ribosomes in a GTP-dependent manner. This chain is Translation factor GUF1 homolog, mitochondrial, found in Ixodes scapularis (Black-legged tick).